The following is a 97-amino-acid chain: Glutamyl-tRNA(Gln) amidotransferase subunit C 2 (97 aa).

The protein belongs to the GatC family. Heterotrimer of A, B and C subunits.

It catalyses the reaction L-glutamyl-tRNA(Gln) + L-glutamine + ATP + H2O = L-glutaminyl-tRNA(Gln) + L-glutamate + ADP + phosphate + H(+). The enzyme catalyses L-aspartyl-tRNA(Asn) + L-glutamine + ATP + H2O = L-asparaginyl-tRNA(Asn) + L-glutamate + ADP + phosphate + 2 H(+). Its function is as follows. Allows the formation of correctly charged Asn-tRNA(Asn) or Gln-tRNA(Gln) through the transamidation of misacylated Asp-tRNA(Asn) or Glu-tRNA(Gln) in organisms which lack either or both of asparaginyl-tRNA or glutaminyl-tRNA synthetases. The reaction takes place in the presence of glutamine and ATP through an activated phospho-Asp-tRNA(Asn) or phospho-Glu-tRNA(Gln). In Clostridium acetobutylicum (strain ATCC 824 / DSM 792 / JCM 1419 / IAM 19013 / LMG 5710 / NBRC 13948 / NRRL B-527 / VKM B-1787 / 2291 / W), this protein is Glutamyl-tRNA(Gln) amidotransferase subunit C 2 (gatC2).